The chain runs to 252 residues: tRNA pseudouridine synthase A (252 aa).

Aspartate 52 acts as the Nucleophile in catalysis. Tyrosine 110 provides a ligand contact to substrate.

It belongs to the tRNA pseudouridine synthase TruA family. In terms of assembly, homodimer.

The enzyme catalyses uridine(38/39/40) in tRNA = pseudouridine(38/39/40) in tRNA. In terms of biological role, formation of pseudouridine at positions 38, 39 and 40 in the anticodon stem and loop of transfer RNAs. In Syntrophotalea carbinolica (strain DSM 2380 / NBRC 103641 / GraBd1) (Pelobacter carbinolicus), this protein is tRNA pseudouridine synthase A.